Reading from the N-terminus, the 662-residue chain is Acetyl-coenzyme A synthetase (662 aa).

CoA-binding positions include 197-200 and Thr317; that span reads RKGK. Residues 393 to 395, 417 to 422, Asp510, and Arg525 each bind ATP; these read GEP and DTWWQT. Position 533 (Ser533) interacts with CoA. Arg536 is a binding site for ATP. The Mg(2+) site is built by His549 and Val552. The residue at position 623 (Lys623) is an N6-acetyllysine.

It belongs to the ATP-dependent AMP-binding enzyme family. It depends on Mg(2+) as a cofactor. Acetylated. Deacetylation by the SIR2-homolog deacetylase activates the enzyme.

The catalysed reaction is acetate + ATP + CoA = acetyl-CoA + AMP + diphosphate. In terms of biological role, catalyzes the conversion of acetate into acetyl-CoA (AcCoA), an essential intermediate at the junction of anabolic and catabolic pathways. AcsA undergoes a two-step reaction. In the first half reaction, AcsA combines acetate with ATP to form acetyl-adenylate (AcAMP) intermediate. In the second half reaction, it can then transfer the acetyl group from AcAMP to the sulfhydryl group of CoA, forming the product AcCoA. This is Acetyl-coenzyme A synthetase from Helicobacter pylori (strain G27).